Reading from the N-terminus, the 143-residue chain is Large ribosomal subunit protein uL16c (143 aa).

It belongs to the universal ribosomal protein uL16 family. In terms of assembly, part of the 50S ribosomal subunit.

The protein localises to the plastid. It localises to the chloroplast. This chain is Large ribosomal subunit protein uL16c, found in Chlorokybus atmophyticus (Soil alga).